The primary structure comprises 609 residues: MFS siderochrome iron transporter 1 (609 aa).

Composition is skewed to basic and acidic residues over residues 1-17 and 25-34; these read MSALTKIREGLAREDNT and PHEKEIHETP. The tract at residues 1 to 69 is disordered; that stretch reads MSALTKIREG…NDSDVPSEDV (69 aa). The next 14 membrane-spanning stretches (helical) occupy residues 81–101, 125–145, 154–174, 182–202, 220–240, 245–265, 300–320, 329–349, 368–390, 407–427, 432–452, 469–489, 496–516, and 573–593; these read LTWGKGSLAALLCLIWTLFLI, LMTTIPIVSDAMTAACYIPMA, AEGFLLMSGFATLGLILMAVS, AAQVFYSVGWGGMIYAVGVLA, SPYMITAFAGSKAAAAFVIDV, WGFGWIALVLPCVTIPLFLVL, VIGIFLFGGGLVVFLLPFNLA, TGYIIAMIIVGFCTLIFFGVW, SVVAACMIDLTYQVSYYTWNYFF, YVNSTFQVVSGVLLFIVGFLI, FYKWTFYFAVPIYIFALGLMI, IFISIGGAVFILVMQLAVLAA, AAALATLYVAGGVGGAVGGAI, and IRMLAAGVGIASLFFIWVPML.

The protein belongs to the major facilitator superfamily.

The protein resides in the cell membrane. In terms of biological role, major facilitator transporter involved in extracellular siderophore uptake. Gibberella zeae produces extracellular coprogen-type siderophores as well as the intracellular siderophore ferricrocin. The role of extracellular siderophores is to supply iron to the fungus during plant infection, and the intracellular ferricrocin is required for intracellular iron distribution and storage with a crucial role in ascus and ascospore development. The polypeptide is MFS siderochrome iron transporter 1 (Gibberella zeae (strain ATCC MYA-4620 / CBS 123657 / FGSC 9075 / NRRL 31084 / PH-1) (Wheat head blight fungus)).